The primary structure comprises 289 residues: Diaminopimelate epimerase (289 aa).

3 residues coordinate substrate: N13, Q47, and N67. C76 functions as the Proton donor in the catalytic mechanism. Substrate-binding positions include 77-78, N167, N200, and 218-219; these read GN and ER. Catalysis depends on C227, which acts as the Proton acceptor. 228–229 serves as a coordination point for substrate; sequence GT.

It belongs to the diaminopimelate epimerase family. Homodimer.

The protein localises to the cytoplasm. It carries out the reaction (2S,6S)-2,6-diaminopimelate = meso-2,6-diaminopimelate. Its pathway is amino-acid biosynthesis; L-lysine biosynthesis via DAP pathway; DL-2,6-diaminopimelate from LL-2,6-diaminopimelate: step 1/1. Catalyzes the stereoinversion of LL-2,6-diaminopimelate (L,L-DAP) to meso-diaminopimelate (meso-DAP), a precursor of L-lysine and an essential component of the bacterial peptidoglycan. In Burkholderia vietnamiensis (strain G4 / LMG 22486) (Burkholderia cepacia (strain R1808)), this protein is Diaminopimelate epimerase.